Consider the following 1409-residue polypeptide: DNA-directed RNA polymerase subunit beta' (1409 aa).

Zn(2+)-binding residues include Cys70, Cys72, Cys85, and Cys88. Positions 461, 463, and 465 each coordinate Mg(2+). Zn(2+) contacts are provided by Cys833, Cys907, Cys914, and Cys917. The interval 1389–1409 is disordered; it reads EPVAQAAESEDVPDVSQQEAA.

Belongs to the RNA polymerase beta' chain family. In terms of assembly, the RNAP catalytic core consists of 2 alpha, 1 beta, 1 beta' and 1 omega subunit. When a sigma factor is associated with the core the holoenzyme is formed, which can initiate transcription. Mg(2+) is required as a cofactor. It depends on Zn(2+) as a cofactor.

The catalysed reaction is RNA(n) + a ribonucleoside 5'-triphosphate = RNA(n+1) + diphosphate. Its function is as follows. DNA-dependent RNA polymerase catalyzes the transcription of DNA into RNA using the four ribonucleoside triphosphates as substrates. The sequence is that of DNA-directed RNA polymerase subunit beta' from Pelobacter propionicus (strain DSM 2379 / NBRC 103807 / OttBd1).